The chain runs to 175 residues: ATP synthase subunit b 1 (175 aa).

The helical transmembrane segment at 26–48 threads the bilayer; the sequence is IINLAIIIGVLYVYGSKFIGNIL.

The protein belongs to the ATPase B chain family. F-type ATPases have 2 components, F(1) - the catalytic core - and F(0) - the membrane proton channel. F(1) has five subunits: alpha(3), beta(3), gamma(1), delta(1), epsilon(1). F(0) has four main subunits: a(1), b(1), b'(1) and c(10-14). The alpha and beta chains form an alternating ring which encloses part of the gamma chain. F(1) is attached to F(0) by a central stalk formed by the gamma and epsilon chains, while a peripheral stalk is formed by the delta, b and b' chains.

Its subcellular location is the cellular thylakoid membrane. In terms of biological role, f(1)F(0) ATP synthase produces ATP from ADP in the presence of a proton or sodium gradient. F-type ATPases consist of two structural domains, F(1) containing the extramembraneous catalytic core and F(0) containing the membrane proton channel, linked together by a central stalk and a peripheral stalk. During catalysis, ATP synthesis in the catalytic domain of F(1) is coupled via a rotary mechanism of the central stalk subunits to proton translocation. Component of the F(0) channel, it forms part of the peripheral stalk, linking F(1) to F(0). This is ATP synthase subunit b 1 from Picosynechococcus sp. (strain ATCC 27264 / PCC 7002 / PR-6) (Agmenellum quadruplicatum).